Here is a 218-residue protein sequence, read N- to C-terminus: MPMTLGYWDVRGLALPIRMLLEYTDTSYEEKKYTMGDAPNYDQSKWLSEKFTLGLDFPNLPYLIDGTHKLTQSNAILRYLARKHGLCGETEEERIRVDILENQLMDNRFQLVNVCYSPDFEKLKPEYLKGLPEKLQLYSQFLGSLPWFAGDKITFADFLVYDVLDQNRIFVPGCLDAFPNLKDFHVRFEGLPKISAYMKSSRFIRVPVFLKKATWTGI.

In terms of domain architecture, GST N-terminal spans 2 to 88 (PMTLGYWDVR…YLARKHGLCG (87 aa)). Glutathione is bound by residues 7–8 (YW), 46–50 (WLSEK), 59–60 (NL), and 72–73 (QS). Residues 90 to 208 (TEEERIRVDI…KSSRFIRVPV (119 aa)) form the GST C-terminal domain. Residue Tyr-116 coordinates substrate.

This sequence belongs to the GST superfamily. Mu family. As to quaternary structure, homodimer. As to expression, well expressed in rabbit liver, brain and kidney.

Its subcellular location is the cytoplasm. The enzyme catalyses RX + glutathione = an S-substituted glutathione + a halide anion + H(+). In terms of biological role, conjugation of reduced glutathione to a wide number of exogenous and endogenous hydrophobic electrophiles. The polypeptide is Glutathione S-transferase Mu 1 (Oryctolagus cuniculus (Rabbit)).